Consider the following 264-residue polypeptide: S-adenosylmethionine decarboxylase proenzyme (264 aa).

Serine 112 (schiff-base intermediate with substrate; via pyruvic acid) is an active-site residue. Position 112 is a pyruvic acid (Ser); by autocatalysis (serine 112). The active-site Proton acceptor; for processing activity is histidine 117. Residue cysteine 140 is the Proton donor; for catalytic activity of the active site.

Belongs to the prokaryotic AdoMetDC family. Type 2 subfamily. In terms of assembly, heterooctamer of four alpha and four beta chains arranged as a tetramer of alpha/beta heterodimers. It depends on pyruvate as a cofactor. Post-translationally, is synthesized initially as an inactive proenzyme. Formation of the active enzyme involves a self-maturation process in which the active site pyruvoyl group is generated from an internal serine residue via an autocatalytic post-translational modification. Two non-identical subunits are generated from the proenzyme in this reaction, and the pyruvate is formed at the N-terminus of the alpha chain, which is derived from the carboxyl end of the proenzyme. The post-translation cleavage follows an unusual pathway, termed non-hydrolytic serinolysis, in which the side chain hydroxyl group of the serine supplies its oxygen atom to form the C-terminus of the beta chain, while the remainder of the serine residue undergoes an oxidative deamination to produce ammonia and the pyruvoyl group blocking the N-terminus of the alpha chain.

The catalysed reaction is S-adenosyl-L-methionine + H(+) = S-adenosyl 3-(methylsulfanyl)propylamine + CO2. It functions in the pathway amine and polyamine biosynthesis; S-adenosylmethioninamine biosynthesis; S-adenosylmethioninamine from S-adenosyl-L-methionine: step 1/1. Catalyzes the decarboxylation of S-adenosylmethionine to S-adenosylmethioninamine (dcAdoMet), the propylamine donor required for the synthesis of the polyamines spermine and spermidine from the diamine putrescine. This is S-adenosylmethionine decarboxylase proenzyme from Shigella boydii serotype 4 (strain Sb227).